Consider the following 130-residue polypeptide: Phosphoribosyl-AMP cyclohydrolase (130 aa).

D77 contributes to the Mg(2+) binding site. C78 is a binding site for Zn(2+). Residues D79 and D81 each coordinate Mg(2+). Zn(2+)-binding residues include C95 and C102.

The protein belongs to the PRA-CH family. Homodimer. Mg(2+) serves as cofactor. It depends on Zn(2+) as a cofactor.

The protein localises to the cytoplasm. It catalyses the reaction 1-(5-phospho-beta-D-ribosyl)-5'-AMP + H2O = 1-(5-phospho-beta-D-ribosyl)-5-[(5-phospho-beta-D-ribosylamino)methylideneamino]imidazole-4-carboxamide. It participates in amino-acid biosynthesis; L-histidine biosynthesis; L-histidine from 5-phospho-alpha-D-ribose 1-diphosphate: step 3/9. In terms of biological role, catalyzes the hydrolysis of the adenine ring of phosphoribosyl-AMP. This Pseudomonas putida (strain ATCC 700007 / DSM 6899 / JCM 31910 / BCRC 17059 / LMG 24140 / F1) protein is Phosphoribosyl-AMP cyclohydrolase.